The primary structure comprises 452 residues: Ribosomal protein uS12 methylthiotransferase RimO (452 aa).

The region spanning 3-118 is the MTTase N-terminal domain; the sequence is GKIGFVSLGC…VMQAIHLHLP (116 aa). Residues Cys-12, Cys-48, Cys-77, Cys-149, Cys-153, and Cys-156 each coordinate [4Fe-4S] cluster. Residues 135 to 381 form the Radical SAM core domain; it reads LTPKHYAYLK…MAKAEDISIK (247 aa). Residues 384 to 452 form the TRAM domain; the sequence is AKKIGKRVQV…SQGHDLIAET (69 aa).

The protein belongs to the methylthiotransferase family. RimO subfamily. [4Fe-4S] cluster is required as a cofactor.

The protein resides in the cytoplasm. The catalysed reaction is L-aspartate(89)-[ribosomal protein uS12]-hydrogen + (sulfur carrier)-SH + AH2 + 2 S-adenosyl-L-methionine = 3-methylsulfanyl-L-aspartate(89)-[ribosomal protein uS12]-hydrogen + (sulfur carrier)-H + 5'-deoxyadenosine + L-methionine + A + S-adenosyl-L-homocysteine + 2 H(+). Catalyzes the methylthiolation of an aspartic acid residue of ribosomal protein uS12. This chain is Ribosomal protein uS12 methylthiotransferase RimO, found in Polynucleobacter asymbioticus (strain DSM 18221 / CIP 109841 / QLW-P1DMWA-1) (Polynucleobacter necessarius subsp. asymbioticus).